A 174-amino-acid chain; its full sequence is UPF0316 protein Dhaf_3052 (174 aa).

The next 3 helical transmembrane spans lie at 4-24, 35-55, and 59-79; these read ILQF…LTTI, VYAS…LSII, and LDSY…VYLG.

The protein belongs to the UPF0316 family.

It localises to the cell membrane. In Desulfitobacterium hafniense (strain DSM 10664 / DCB-2), this protein is UPF0316 protein Dhaf_3052.